The chain runs to 233 residues: Sugar fermentation stimulation protein homolog (233 aa).

This sequence belongs to the SfsA family.

This is Sugar fermentation stimulation protein homolog from Rhodospirillum centenum (strain ATCC 51521 / SW).